We begin with the raw amino-acid sequence, 139 residues long: Trafficking protein particle complex subunit 2-like protein (139 aa).

The protein belongs to the TRAPP small subunits family. Sedlin subfamily. As to quaternary structure, component of the multisubunit TRAPP (transport protein particle) complex, which includes at least TRAPPC2, TRAPPC2L, TRAPPC3, TRAPPC3L, TRAPPC4, TRAPPC5, TRAPPC8, TRAPPC9, TRAPPC10, TRAPPC11 and TRAPPC12. Interacts with the heterodimer TRAPPC3-TRAPPC6A.

The protein resides in the cytoplasm. It is found in the perinuclear region. It localises to the endoplasmic reticulum. Its subcellular location is the golgi apparatus. In terms of biological role, may play a role in vesicular transport from endoplasmic reticulum to Golgi. This Rattus norvegicus (Rat) protein is Trafficking protein particle complex subunit 2-like protein (Trappc2l).